A 199-amino-acid polypeptide reads, in one-letter code: Recombination protein RecR (199 aa).

The C4-type zinc finger occupies 56–71; it reads CTVCFNVTEQETCNIC. In terms of domain architecture, Toprim spans 79-174; that stretch reads SVICVVEESK…TVTRLASGLP (96 aa).

Belongs to the RecR family.

Functionally, may play a role in DNA repair. It seems to be involved in an RecBC-independent recombinational process of DNA repair. It may act with RecF and RecO. This chain is Recombination protein RecR, found in Paenarthrobacter aurescens (strain TC1).